The following is a 364-amino-acid chain: Anthranilate phosphoribosyltransferase (364 aa).

5-phospho-alpha-D-ribose 1-diphosphate-binding positions include G101, 104–105, T109, 111–114, 129–137, and G141; these read GD, NLST, and KHGNRAASS. An anthranilate-binding site is contributed by G101. S113 is a binding site for Mg(2+). N132 serves as a coordination point for anthranilate. R187 is a binding site for anthranilate. Positions 245 and 246 each coordinate Mg(2+).

It belongs to the anthranilate phosphoribosyltransferase family. As to quaternary structure, homodimer. The cofactor is Mg(2+).

The enzyme catalyses N-(5-phospho-beta-D-ribosyl)anthranilate + diphosphate = 5-phospho-alpha-D-ribose 1-diphosphate + anthranilate. Its pathway is amino-acid biosynthesis; L-tryptophan biosynthesis; L-tryptophan from chorismate: step 2/5. Its function is as follows. Catalyzes the transfer of the phosphoribosyl group of 5-phosphorylribose-1-pyrophosphate (PRPP) to anthranilate to yield N-(5'-phosphoribosyl)-anthranilate (PRA). In Mycolicibacterium gilvum (strain PYR-GCK) (Mycobacterium gilvum (strain PYR-GCK)), this protein is Anthranilate phosphoribosyltransferase.